Consider the following 84-residue polypeptide: Small ribosomal subunit protein bS16 (84 aa).

The protein belongs to the bacterial ribosomal protein bS16 family.

The sequence is that of Small ribosomal subunit protein bS16 from Dechloromonas aromatica (strain RCB).